The following is a 558-amino-acid chain: MEIILFLTMMVMITYVFSGYLYRVALVQSSRVDLIFTRFENMCFKIIGTDLEHMSAKTYVKHFLAFNGFMGFITFVLLIVQQWLFLNPNHNLNQSIDLAFNTAISFLTNSNLQHYNGESDVTYLTQMIVMTYLMFTSSASGYAVCIAMLRRLTGLTNIIGNFYQDIVRFIVRVLLPLSCLISILLMTQGVPQTLHANLMIRTLSGHIQHIAFGPIASLESIKHLGTNGGGFLAGNSATPFENPNIWSNFIEMGSMMLLPMSMLFLFGRMLSRHGKRVHRHALILFVAMFFIFIAILTLTMWSEYRGNPILANLGIYGPNMEGKEVRFGAGLSALFTVITTAFTTGSVNNMHDSLTPLGGLGPMVLMMLNVVFGGEGVGLMNLLIYVLLTVFICSLMVGKTPEYLNMPIGAREMKCIVLVFLIHPILILVFSALAFMIPGASESITNPSFHGISQVMYEMTSAAANNGSGFEGLKDDTTFWNISTGIIMLLSRYIPIILQLMIASSLVNKKSYHQDKYTIAIDKPYFGVSLIVFIVLLSGLTFIPVLLLGPIGEFLTLK.

12 helical membrane-spanning segments follow: residues 1–21, 66–86, 127–147, 166–186, 245–265, 281–301, 327–347, 354–374, 377–397, 416–436, 482–502, and 531–551; these read MEIILFLTMMVMITYVFSGYL, FNGFMGFITFVLLIVQQWLFL, MIVMTYLMFTSSASGYAVCIA, IVRFIVRVLLPLSCLISILLM, IWSNFIEMGSMMLLPMSMLFL, ALILFVAMFFIFIAILTLTMW, FGAGLSALFTVITTAFTTGSV, LTPLGGLGPMVLMMLNVVFGG, VGLMNLLIYVLLTVFICSLMV, IVLVFLIHPILILVFSALAFM, ISTGIIMLLSRYIPIILQLMI, and IVFIVLLSGLTFIPVLLLGPI.

Belongs to the KdpA family. As to quaternary structure, the system is composed of three essential subunits: KdpA, KdpB and KdpC.

The protein localises to the cell membrane. Its function is as follows. Part of the high-affinity ATP-driven potassium transport (or Kdp) system, which catalyzes the hydrolysis of ATP coupled with the electrogenic transport of potassium into the cytoplasm. This subunit binds the extracellular potassium ions and delivers the ions to the membrane domain of KdpB through an intramembrane tunnel. This chain is Potassium-transporting ATPase potassium-binding subunit, found in Staphylococcus aureus (strain MSSA476).